The following is a 124-amino-acid chain: Large ribosomal subunit protein eL31 (124 aa).

Belongs to the eukaryotic ribosomal protein eL31 family.

The protein is Large ribosomal subunit protein eL31 (RpL31) of Aedes aegypti (Yellowfever mosquito).